A 963-amino-acid polypeptide reads, in one-letter code: Phosphoenolpyruvate carboxylase 2 (963 aa).

Position 11 is a phosphoserine (S11). Active-site residues include H172 and K599. At S701 the chain carries Phosphoserine.

The protein belongs to the PEPCase type 1 family. As to quaternary structure, homotetramer. It depends on Mg(2+) as a cofactor. In terms of tissue distribution, expressed in all plant organs, with higher levels in stems and leaves.

The protein localises to the cytoplasm. It catalyses the reaction oxaloacetate + phosphate = phosphoenolpyruvate + hydrogencarbonate. With respect to regulation, by light-reversible phosphorylation. In terms of biological role, through the carboxylation of phosphoenolpyruvate (PEP) it forms oxaloacetate, a four-carbon dicarboxylic acid source for the tricarboxylic acid cycle. The chain is Phosphoenolpyruvate carboxylase 2 (PPC2) from Arabidopsis thaliana (Mouse-ear cress).